A 370-amino-acid polypeptide reads, in one-letter code: Notoamide biosynthesis cluster protein J (370 aa).

The signal sequence occupies residues 1-22 (MRIMSIMLHLLATILLSSAVSA). N-linked (GlcNAc...) asparagine glycans are attached at residues asparagine 159, asparagine 167, asparagine 192, asparagine 235, asparagine 282, asparagine 340, and asparagine 346.

Its function is as follows. Part of the gene cluster that mediates the biosynthesis of notoamide, a fungal indole alkaloid that belongs to a family of natural products containing a characteristic bicyclo[2.2.2]diazaoctane core. The first step of notoamide biosynthesis involves coupling of L-proline and L-tryptophan by the bimodular NRPS notE, to produce cyclo-L-tryptophan-L-proline called brevianamide F. The reverse prenyltransferase notF then acts as a deoxybrevianamide E synthase and converts brevianamide F to deoxybrevianamide E via reverse prenylation at C-2 of the indole ring leading to the bicyclo[2.2.2]diazaoctane core. Deoxybrevianamide E is further hydroxylated at C-6 of the indole ring, likely catalyzed by the cytochrome P450 monooxygenase notG, to yield 6-hydroxy-deoxybrevianamide E. 6-hydroxy-deoxybrevianamide E is a specific substrate of the prenyltransferase notC for normal prenylation at C-7 to produce 6-hydroxy-7-prenyl-deoxybrevianamide, also called notoamide S. As the proposed pivotal branching point in notoamide biosynthesis, notoamide S can be diverted to notoamide E through an oxidative pyran ring closure putatively catalyzed by either notH cytochrome P450 monooxygenase or the notD FAD-linked oxidoreductase. This step would be followed by an indole 2,3-epoxidation-initiated pinacol-like rearrangement catalyzed by the notB FAD-dependent monooxygenase leading to the formation of notoamide C and notoamide D. On the other hand notoamide S is converted to notoamide T by notH (or notD), a bifunctional oxidase that also functions as the intramolecular Diels-Alderase responsible for generation of (+)-notoamide T. To generate antipodal (-)-notoaminide T, notH' (or notD') in Aspergillus versicolor is expected to catalyze a Diels-Alder reaction leading to the opposite stereochemistry. The remaining oxidoreductase notD (or notH) likely catalyzes the oxidative pyran ring formation to yield (+)-stephacidin A. The FAD-dependent monooxygenase notI is highly similar to notB and is predicted to catalyze a similar conversion from (+)-stephacidin A to (-)-notoamide B via the 2,3-epoxidation of (+)-stephacidin A followed by a pinacol-type rearrangement. Finally, it remains unclear which enzyme could be responsible for the final hydroxylation steps leading to notoamide A and sclerotiamide. The function of notJ in the notoamide biosynthesis has not been determined yet. In Aspergillus sp. (strain MF297-2), this protein is Notoamide biosynthesis cluster protein J.